The chain runs to 322 residues: Adenine deaminase (322 aa).

Zn(2+) contacts are provided by H11, H13, and H189. E192 acts as the Proton donor in catalysis. D270 lines the Zn(2+) pocket. D271 is a substrate binding site.

It belongs to the metallo-dependent hydrolases superfamily. Adenosine and AMP deaminases family. Adenine deaminase type 2 subfamily. Zn(2+) is required as a cofactor.

It catalyses the reaction adenine + H2O + H(+) = hypoxanthine + NH4(+). In terms of biological role, catalyzes the hydrolytic deamination of adenine to hypoxanthine. Plays an important role in the purine salvage pathway and in nitrogen catabolism. This chain is Adenine deaminase, found in Rhizobium johnstonii (strain DSM 114642 / LMG 32736 / 3841) (Rhizobium leguminosarum bv. viciae).